A 234-amino-acid polypeptide reads, in one-letter code: Superoxide dismutase [Mn], mitochondrial (234 aa).

Residues 1–34 constitute a mitochondrion transit peptide; it reads MFSIRSSSRVLLKASSATTRATLNAAASKTFTRS. Mn(2+)-binding residues include His60, His108, Asp198, and His202.

This sequence belongs to the iron/manganese superoxide dismutase family. Homotetramer. The cofactor is Mn(2+).

Its subcellular location is the mitochondrion matrix. It catalyses the reaction 2 superoxide + 2 H(+) = H2O2 + O2. Its function is as follows. Destroys superoxide anion radicals which are normally produced within the cells and which are toxic to biological systems. The polypeptide is Superoxide dismutase [Mn], mitochondrial (SOD2) (Candida albicans (Yeast)).